The primary structure comprises 445 residues: Trigger factor (445 aa).

The PPIase FKBP-type domain occupies 171–256 (NDIVIIDFKG…VHVVNEVETP (86 aa)).

The protein belongs to the FKBP-type PPIase family. Tig subfamily.

It localises to the cytoplasm. It carries out the reaction [protein]-peptidylproline (omega=180) = [protein]-peptidylproline (omega=0). In terms of biological role, involved in protein export. Acts as a chaperone by maintaining the newly synthesized protein in an open conformation. Functions as a peptidyl-prolyl cis-trans isomerase. In Malacoplasma penetrans (strain HF-2) (Mycoplasma penetrans), this protein is Trigger factor.